The sequence spans 1405 residues: DNA-directed RNA polymerase subunit beta' (1405 aa).

Zn(2+)-binding residues include Cys70, Cys72, Cys85, and Cys88. Positions 460, 462, and 464 each coordinate Mg(2+). Positions 815, 890, 897, and 900 each coordinate Zn(2+).

It belongs to the RNA polymerase beta' chain family. In terms of assembly, the RNAP catalytic core consists of 2 alpha, 1 beta, 1 beta' and 1 omega subunit. When a sigma factor is associated with the core the holoenzyme is formed, which can initiate transcription. The cofactor is Mg(2+). Requires Zn(2+) as cofactor.

It carries out the reaction RNA(n) + a ribonucleoside 5'-triphosphate = RNA(n+1) + diphosphate. Its function is as follows. DNA-dependent RNA polymerase catalyzes the transcription of DNA into RNA using the four ribonucleoside triphosphates as substrates. This Xanthomonas campestris pv. campestris (strain B100) protein is DNA-directed RNA polymerase subunit beta'.